Consider the following 1266-residue polypeptide: Kinesin-like protein KIN-12G (1266 aa).

Residues 1–22 (MPSDCGDDDHGGGSAPAGFELQ) form a disordered region. The region spanning 32–369 (NVQVVIRVRP…LKFAQRAKYI (338 aa)) is the Kinesin motor domain. 113–120 (GQTGSGKT) provides a ligand contact to ATP. 4 coiled-coil regions span residues 613 to 668 (MEFI…SEAV), 817 to 854 (RSELTDLQLQLDEMHEENDKLMGLYEKAMQERDEFKRK), 1029 to 1060 (ARESETALRSKIDGLKVKLRSFEAQRKEAERV), and 1084 to 1120 (SELLRSEEERTKLLSELKKSREQLIMVQKEIKSMNRH).

Belongs to the TRAFAC class myosin-kinesin ATPase superfamily. Kinesin family. KIN-12 subfamily.

The chain is Kinesin-like protein KIN-12G from Oryza sativa subsp. japonica (Rice).